The following is a 424-amino-acid chain: MDKLVIRGGRRLIGSVTASGSKNSSLPVIAATLLSGNGTFTLHRIPDLQDISTFTQLINHLGAQTSFSDNTLTVSTGNVESLLAPYELVKKMRASIYVLGPLLARFGEATVSLPGGCAFGPRPIDLHLMAMEKLGAEITIETGFITAKARNGKLQGARIDFPVSSVGATGNALMAAVLAEGKTIITNAAAEPEIEALCRFLASMGARIEGTGTTELIIEGVTSLSAVEFTNVFDRIEAGTLLAAAAITGGTVTVDGVEPEQLKSVLKKFAHAGCTISQTPGSITLASPEKLIPTDITAKPYPSFPTDMQAQWTALMTQAEGTSRITDKVYHERFNHIPELNRLGAHIEIRKNQAIVEGPRRLSGTKVMSTDLRASACLVLAGLVADGVTEVLRVYHLDRGYEQIEMKLNSLGADITREKYKEFS.

22-23 (KN) lines the phosphoenolpyruvate pocket. A UDP-N-acetyl-alpha-D-glucosamine-binding site is contributed by Arg-93. The active-site Proton donor is the Cys-117. Cys-117 bears the 2-(S-cysteinyl)pyruvic acid O-phosphothioketal mark. UDP-N-acetyl-alpha-D-glucosamine contacts are provided by residues 122-126 (RPIDL), Asp-307, and Val-329.

The protein belongs to the EPSP synthase family. MurA subfamily.

The protein localises to the cytoplasm. It catalyses the reaction phosphoenolpyruvate + UDP-N-acetyl-alpha-D-glucosamine = UDP-N-acetyl-3-O-(1-carboxyvinyl)-alpha-D-glucosamine + phosphate. It functions in the pathway cell wall biogenesis; peptidoglycan biosynthesis. Cell wall formation. Adds enolpyruvyl to UDP-N-acetylglucosamine. This Chlorobium limicola (strain DSM 245 / NBRC 103803 / 6330) protein is UDP-N-acetylglucosamine 1-carboxyvinyltransferase.